The following is a 207-amino-acid chain: Urease accessory protein UreG (207 aa).

Gly-16–Thr-23 contributes to the GTP binding site.

It belongs to the SIMIBI class G3E GTPase family. UreG subfamily. In terms of assembly, homodimer. UreD, UreF and UreG form a complex that acts as a GTP-hydrolysis-dependent molecular chaperone, activating the urease apoprotein by helping to assemble the nickel containing metallocenter of UreC. The UreE protein probably delivers the nickel.

It is found in the cytoplasm. Functionally, facilitates the functional incorporation of the urease nickel metallocenter. This process requires GTP hydrolysis, probably effectuated by UreG. The polypeptide is Urease accessory protein UreG (Shewanella halifaxensis (strain HAW-EB4)).